Consider the following 343-residue polypeptide: Ribosomal RNA small subunit methyltransferase C (343 aa).

This sequence belongs to the methyltransferase superfamily. RsmC family. As to quaternary structure, monomer.

It localises to the cytoplasm. The enzyme catalyses guanosine(1207) in 16S rRNA + S-adenosyl-L-methionine = N(2)-methylguanosine(1207) in 16S rRNA + S-adenosyl-L-homocysteine + H(+). Its function is as follows. Specifically methylates the guanine in position 1207 of 16S rRNA in the 30S particle. This chain is Ribosomal RNA small subunit methyltransferase C, found in Escherichia fergusonii (strain ATCC 35469 / DSM 13698 / CCUG 18766 / IAM 14443 / JCM 21226 / LMG 7866 / NBRC 102419 / NCTC 12128 / CDC 0568-73).